We begin with the raw amino-acid sequence, 195 residues long: Protein GrpE (195 aa).

The protein belongs to the GrpE family. As to quaternary structure, homodimer.

It localises to the cytoplasm. Functionally, participates actively in the response to hyperosmotic and heat shock by preventing the aggregation of stress-denatured proteins, in association with DnaK and GrpE. It is the nucleotide exchange factor for DnaK and may function as a thermosensor. Unfolded proteins bind initially to DnaJ; upon interaction with the DnaJ-bound protein, DnaK hydrolyzes its bound ATP, resulting in the formation of a stable complex. GrpE releases ADP from DnaK; ATP binding to DnaK triggers the release of the substrate protein, thus completing the reaction cycle. Several rounds of ATP-dependent interactions between DnaJ, DnaK and GrpE are required for fully efficient folding. In Blochmanniella pennsylvanica (strain BPEN), this protein is Protein GrpE.